Reading from the N-terminus, the 1488-residue chain is Chromosome partition protein MukB (1488 aa).

Glycine 34–serine 41 provides a ligand contact to ATP. 3 coiled-coil regions span residues leucine 326 to glutamine 418, leucine 444 to histidine 472, and arginine 509 to proline 602. The segment at proline 666–arginine 783 is flexible hinge. 3 coiled-coil regions span residues glutamate 835–glutamate 923, glutamate 977–glycine 1116, and valine 1209–valine 1265. Residues alanine 1049–arginine 1074 are disordered. Residues serine 1051 to histidine 1065 show a composition bias toward basic and acidic residues.

Belongs to the SMC family. MukB subfamily. Homodimerization via its hinge domain. Binds to DNA via its C-terminal region. Interacts, and probably forms a ternary complex, with MukE and MukF via its C-terminal region. The complex formation is stimulated by calcium or magnesium. Interacts with tubulin-related protein FtsZ.

It localises to the cytoplasm. Its subcellular location is the nucleoid. Functionally, plays a central role in chromosome condensation, segregation and cell cycle progression. Functions as a homodimer, which is essential for chromosome partition. Involved in negative DNA supercoiling in vivo, and by this means organize and compact chromosomes. May achieve or facilitate chromosome segregation by condensation DNA from both sides of a centrally located replisome during cell division. The sequence is that of Chromosome partition protein MukB from Salmonella typhi.